The following is a 163-amino-acid chain: Nucleotide-binding protein SACE_6882 (163 aa).

It belongs to the YajQ family.

In terms of biological role, nucleotide-binding protein. This Saccharopolyspora erythraea (strain ATCC 11635 / DSM 40517 / JCM 4748 / NBRC 13426 / NCIMB 8594 / NRRL 2338) protein is Nucleotide-binding protein SACE_6882.